The sequence spans 185 residues: Recombination protein RecR (185 aa).

A C4-type zinc finger spans residues 44-59 (CSVCFHLSSEPVCEIC). In terms of domain architecture, Toprim spans 67 to 161 (NTICVVADSR…KVTRIAFGLP (95 aa)).

This sequence belongs to the RecR family.

Its function is as follows. May play a role in DNA repair. It seems to be involved in an RecBC-independent recombinational process of DNA repair. It may act with RecF and RecO. The sequence is that of Recombination protein RecR from Trichormus variabilis (strain ATCC 29413 / PCC 7937) (Anabaena variabilis).